A 210-amino-acid polypeptide reads, in one-letter code: NAD(P)H-quinone oxidoreductase subunit I (210 aa).

4Fe-4S ferredoxin-type domains lie at 54-83 (GRIH…VDWV) and 94-123 (YSYS…VTED). Positions 63, 66, 69, 73, 103, 106, 109, and 113 each coordinate [4Fe-4S] cluster.

It belongs to the complex I 23 kDa subunit family. In terms of assembly, NDH-1 is composed of at least 11 different subunits. The cofactor is [4Fe-4S] cluster.

The protein resides in the cellular thylakoid membrane. The enzyme catalyses a plastoquinone + NADH + (n+1) H(+)(in) = a plastoquinol + NAD(+) + n H(+)(out). It carries out the reaction a plastoquinone + NADPH + (n+1) H(+)(in) = a plastoquinol + NADP(+) + n H(+)(out). Its function is as follows. NDH-1 shuttles electrons from an unknown electron donor, via FMN and iron-sulfur (Fe-S) centers, to quinones in the respiratory and/or the photosynthetic chain. The immediate electron acceptor for the enzyme in this species is believed to be plastoquinone. Couples the redox reaction to proton translocation, and thus conserves the redox energy in a proton gradient. The sequence is that of NAD(P)H-quinone oxidoreductase subunit I from Synechococcus sp. (strain JA-3-3Ab) (Cyanobacteria bacterium Yellowstone A-Prime).